The chain runs to 466 residues: Ribulose bisphosphate carboxylase large chain (466 aa).

K4 bears the N6,N6,N6-trimethyllysine mark. The substrate site is built by N113 and T163. K165 functions as the Proton acceptor in the catalytic mechanism. Residue K167 participates in substrate binding. Positions 191, 193, and 194 each coordinate Mg(2+). K191 carries the N6-carboxylysine modification. H284 acts as the Proton acceptor in catalysis. Residues R285, H317, and S369 each coordinate substrate.

This sequence belongs to the RuBisCO large chain family. Type I subfamily. In terms of assembly, heterohexadecamer of 8 large chains and 8 small chains; disulfide-linked. The disulfide link is formed within the large subunit homodimers. Mg(2+) is required as a cofactor. The disulfide bond which can form in the large chain dimeric partners within the hexadecamer appears to be associated with oxidative stress and protein turnover.

It localises to the plastid. It is found in the chloroplast. It catalyses the reaction 2 (2R)-3-phosphoglycerate + 2 H(+) = D-ribulose 1,5-bisphosphate + CO2 + H2O. The catalysed reaction is D-ribulose 1,5-bisphosphate + O2 = 2-phosphoglycolate + (2R)-3-phosphoglycerate + 2 H(+). Its function is as follows. RuBisCO catalyzes two reactions: the carboxylation of D-ribulose 1,5-bisphosphate, the primary event in carbon dioxide fixation, as well as the oxidative fragmentation of the pentose substrate in the photorespiration process. Both reactions occur simultaneously and in competition at the same active site. The chain is Ribulose bisphosphate carboxylase large chain from Barleria prionitis (Porcupine flower).